Consider the following 380-residue polypeptide: Tryptophan--tRNA ligase (380 aa).

Positions Pro81–His89 match the 'HIGH' region motif. The 'KMSKS' region signature appears at Lys253–Ser257.

This sequence belongs to the class-I aminoacyl-tRNA synthetase family.

Its subcellular location is the cytoplasm. It catalyses the reaction tRNA(Trp) + L-tryptophan + ATP = L-tryptophyl-tRNA(Trp) + AMP + diphosphate + H(+). The sequence is that of Tryptophan--tRNA ligase from Saccharolobus solfataricus (strain ATCC 35092 / DSM 1617 / JCM 11322 / P2) (Sulfolobus solfataricus).